A 148-amino-acid polypeptide reads, in one-letter code: Arginine repressor (148 aa).

The protein belongs to the ArgR family.

It is found in the cytoplasm. Its pathway is amino-acid biosynthesis; L-arginine biosynthesis [regulation]. Functionally, regulates arginine biosynthesis genes. The protein is Arginine repressor of Chlorobium limicola (strain DSM 245 / NBRC 103803 / 6330).